The following is a 231-amino-acid chain: Uracil-DNA glycosylase (231 aa).

Asp74 serves as the catalytic Proton acceptor.

This sequence belongs to the uracil-DNA glycosylase (UDG) superfamily. UNG family.

The protein localises to the cytoplasm. It catalyses the reaction Hydrolyzes single-stranded DNA or mismatched double-stranded DNA and polynucleotides, releasing free uracil.. Its function is as follows. Excises uracil residues from the DNA which can arise as a result of misincorporation of dUMP residues by DNA polymerase or due to deamination of cytosine. The polypeptide is Uracil-DNA glycosylase (Campylobacter jejuni subsp. doylei (strain ATCC BAA-1458 / RM4099 / 269.97)).